We begin with the raw amino-acid sequence, 207 residues long: Protein 6b (207 aa).

The disordered stretch occupies residues N161–R185. Acidic residues predominate over residues E164–E178.

Involved in tumor formation and increases auxin and cytokinin effects in host plants. In Agrobacterium tumefaciens (strain 15955), this protein is Protein 6b (6b).